Consider the following 308-residue polypeptide: Ribosomal RNA large subunit methyltransferase F (308 aa).

This sequence belongs to the methyltransferase superfamily. METTL16/RlmF family.

It localises to the cytoplasm. It carries out the reaction adenosine(1618) in 23S rRNA + S-adenosyl-L-methionine = N(6)-methyladenosine(1618) in 23S rRNA + S-adenosyl-L-homocysteine + H(+). In terms of biological role, specifically methylates the adenine in position 1618 of 23S rRNA. The sequence is that of Ribosomal RNA large subunit methyltransferase F from Shigella dysenteriae serotype 1 (strain Sd197).